Reading from the N-terminus, the 277-residue chain is R-spondin-3 (277 aa).

The N-terminal stretch at 1 to 21 is a signal peptide; it reads MHLRLISCFFIILNFMEYIGS. 2 FU repeats span residues 35 to 86 and 92 to 135; these read PNVS…GYYG and INKC…GLEA. An N-linked (GlcNAc...) asparagine glycan is attached at Asn36. Disulfide bonds link Cys41-Cys48, Cys45-Cys54, Cys57-Cys76, Cys80-Cys95, Cys98-Cys105, Cys102-Cys111, Cys114-Cys125, Cys129-Cys142, Cys148-Cys190, Cys159-Cys166, and Cys199-Cys206. Positions 147-207 constitute a TSP type-1 domain; the sequence is HCEASEWSPW…TCIVQRKKCS (61 aa). The segment at 210–277 is disordered; the sequence is ERGKKGRERK…QKSVSVSTVH (68 aa). Residues 213–223 show a composition bias toward basic residues; sequence KKGRERKRKKL. The segment covering 232–245 has biased composition (low complexity); sequence SSSSDSKGLESSIE.

This sequence belongs to the R-spondin family. In terms of assembly, interacts with the extracellular domain of FZD8 and LRP6. It however does not form a ternary complex with FZD8 and LRP6. Interacts with WNT1. Binds heparin. Interacts with LGR4, LGR5 and LGR6. As to expression, highly expressed in endothelial cells.

The protein localises to the secreted. Its function is as follows. Activator of the canonical Wnt signaling pathway by acting as a ligand for LGR4-6 receptors, which acts as a key regulator of angiogenesis. Upon binding to LGR4-6 (LGR4, LGR5 or LGR6), LGR4-6 associate with phosphorylated LRP6 and frizzled receptors that are activated by extracellular Wnt receptors, triggering the canonical Wnt signaling pathway to increase expression of target genes. Also regulates the canonical Wnt/beta-catenin-dependent pathway and non-canonical Wnt signaling by acting as an inhibitor of ZNRF3, an important regulator of the Wnt signaling pathway. Acts as a ligand for frizzled FZD8 and LRP6. May negatively regulate the TGF-beta pathway. Acts as a key regulator of angiogenesis by controlling vascular stability and pruning: acts by activating the non-canonical Wnt signaling pathway in endothelial cells. Can also amplify Wnt signaling pathway independently of LGR4-6 receptors, possibly by acting as a direct antagonistic ligand to RNF43 and ZNRF3. The protein is R-spondin-3 (Rspo3) of Mus musculus (Mouse).